A 120-amino-acid polypeptide reads, in one-letter code: Spermidine export protein MdtJ (120 aa).

Transmembrane regions (helical) follow at residues 1–21 (MFYW…TLSM), 31–51 (TGFI…SFAV), 54–74 (IALG…ITLF), and 81–101 (EALS…IALI).

This sequence belongs to the drug/metabolite transporter (DMT) superfamily. Small multidrug resistance (SMR) (TC 2.A.7.1) family. MdtJ subfamily. Forms a complex with MdtI.

It is found in the cell inner membrane. Its function is as follows. Catalyzes the excretion of spermidine. In Citrobacter koseri (strain ATCC BAA-895 / CDC 4225-83 / SGSC4696), this protein is Spermidine export protein MdtJ.